A 299-amino-acid chain; its full sequence is Putative syntaxin-2 (299 aa).

Residues Met1–Ala270 lie on the Cytoplasmic side of the membrane. Residues Glu112–Ser146 are a coiled coil. The region spanning Tyr193–Ala255 is the t-SNARE coiled-coil homology domain. A helical; Anchor for type IV membrane protein transmembrane segment spans residues Ala271–Leu291. At Ser292–Lys299 the chain is on the extracellular side.

The protein belongs to the syntaxin family.

It localises to the membrane. In terms of biological role, potentially involved in docking of synaptic vesicles at presynaptic active zones. The chain is Putative syntaxin-2 (syx-2) from Caenorhabditis elegans.